Here is an 83-residue protein sequence, read N- to C-terminus: Kappa-theraphotoxin-Cg2b (83 aa).

A signal peptide spans 1 to 21 (MKGSAFAIILGLVVLCACSFA). Residues 22-53 (EDEQDQFASPNELLRSMFLESRHELIPEVEGR) constitute a propeptide that is removed on maturation. Intrachain disulfides connect Cys-55–Cys-69, Cys-62–Cys-74, and Cys-68–Cys-78.

The protein belongs to the neurotoxin 30 (phrixotoxin) family. In terms of tissue distribution, expressed by the venom gland.

It is found in the secreted. Functionally, probable ion channel inhibitor. This chain is Kappa-theraphotoxin-Cg2b, found in Chilobrachys guangxiensis (Chinese earth tiger tarantula).